The sequence spans 320 residues: Malate dehydrogenase (320 aa).

Residues 10–15 and Asp-34 each bind NAD(+); that span reads GAGNIG. Substrate is bound by residues Arg-83 and Arg-89. NAD(+)-binding positions include Asn-96 and 119 to 121; that span reads ITN. Asn-121 and Arg-152 together coordinate substrate. Residue His-176 is the Proton acceptor of the active site.

The protein belongs to the LDH/MDH superfamily. MDH type 3 family.

The enzyme catalyses (S)-malate + NAD(+) = oxaloacetate + NADH + H(+). Its function is as follows. Catalyzes the reversible oxidation of malate to oxaloacetate. The polypeptide is Malate dehydrogenase (Novosphingobium aromaticivorans (strain ATCC 700278 / DSM 12444 / CCUG 56034 / CIP 105152 / NBRC 16084 / F199)).